The following is a 210-amino-acid chain: BAG family molecular chaperone regulator 2 (210 aa).

Ala-2 bears the N-acetylalanine mark. Residues Ser-20, Ser-31, and Ser-73 each carry the phosphoserine modification. The stretch at 20–60 (SMADRSSRLLESLDQLELRVEALRDAATAVEQEKEILLEMI) forms a coiled coil. Residues 109 to 189 (SLKHATRIID…NIDNSDKAIK (81 aa)) form the BAG domain.

As to quaternary structure, binds to the ATPase domain of HSP/HSC70 chaperones. May interact with NWD1. Interacts with HSPA1A (via NBD), HSPA1B (via NBD) and HSPA8. May interact with DNJC9; the interaction seems to be histone-dependent.

Functionally, co-chaperone for HSP70 and HSC70 chaperone proteins. Acts as a nucleotide-exchange factor (NEF) promoting the release of ADP from the HSP70 and HSC70 proteins thereby triggering client/substrate protein release. The chain is BAG family molecular chaperone regulator 2 (Bag2) from Mus musculus (Mouse).